The primary structure comprises 255 residues: Glioma pathogenesis-related protein 1 (255 aa).

The first 17 residues, 1–17, serve as a signal peptide directing secretion; the sequence is MQVILAVIVWMASSVSS. Residues 39–164 enclose the SCP domain; that stretch reads QVHNQLRSKV…PNGANFICDY (126 aa). A helical membrane pass occupies residues 224 to 244; the sequence is SLFLIAKSVLLLLSVIITIWV.

This sequence belongs to the CRISP family.

The protein localises to the membrane. The sequence is that of Glioma pathogenesis-related protein 1 (Glipr1) from Mus musculus (Mouse).